The following is a 103-amino-acid chain: Small ribosomal subunit protein uS10 (103 aa).

Belongs to the universal ribosomal protein uS10 family. In terms of assembly, part of the 30S ribosomal subunit.

In terms of biological role, involved in the binding of tRNA to the ribosomes. In Burkholderia mallei (strain NCTC 10247), this protein is Small ribosomal subunit protein uS10.